We begin with the raw amino-acid sequence, 598 residues long: Potassium voltage-gated channel subfamily A member 5 (598 aa).

The tract at residues 1–89 (MEIALGPLEN…EEGEGDPGLS (89 aa)) is disordered. The tract at residues 1-195 (MEIALGPLEN…FYQLGDEAME (195 aa)) is tetramerization domain. The Cytoplasmic portion of the chain corresponds to 1–231 (MEIALGPLEN…LIFEYPESSG (231 aa)). Over residues 60 to 69 (RPLPPQPPEL) the composition is skewed to pro residues. Residue lysine 205 forms a Glycyl lysine isopeptide (Lys-Gly) (interchain with G-Cter in SUMO) linkage. Residues 232–253 (SARAIAIVSVLVILISIITFCL) traverse the membrane as a helical segment. The Extracellular portion of the chain corresponds to 254–308 (ETLPEFKDERELLRHPPVPHQPPAAPALGANGSGAVAPASGSTVAPLLPRTLADP). A helical transmembrane segment spans residues 309-330 (FFIVETTCVIWFTFELLVRFFA). The S-palmitoyl cysteine moiety is linked to residue cysteine 331. Topologically, residues 331–341 (CPSKAEFSRNI) are cytoplasmic. The helical transmembrane segment at 342–362 (MNIIDIVAIFPYFITLGTELA) threads the bilayer. The Extracellular segment spans residues 363–380 (EQQPGGGGGGQNGQQAMS). The chain crosses the membrane as a helical; Voltage-sensor span at residues 381–401 (LAILRVIRLVRVFRIFKLSRH). Over 402-416 (SKGLQILGKTLQASM) the chain is Cytoplasmic. The interval 403-416 (KGLQILGKTLQASM) is S4-S5 linker. A helical membrane pass occupies residues 417–438 (RELGLLIFFLFIGVILFSSAVY). At 439-452 (FAEADNQGTHFSSI) the chain is on the extracellular side. The helical intramembrane region spans 453–464 (PDAFWWAVVTMT). The Selectivity filter signature appears at 465 to 470 (TVGYGD). Residues 465 to 472 (TVGYGDMR) lie within the membrane without spanning it. A helical membrane pass occupies residues 480-508 (IVGSLCAIAGVLTIALPVPVIVSNFNYFY). The Cytoplasmic portion of the chain corresponds to 509 to 598 (HRETDHEEQA…CLDTSRETDL (90 aa)). The segment at 517–539 (QAALKEEPGSQSRGTSLDAGGQR) is disordered. Lysine 521 participates in a covalent cross-link: Glycyl lysine isopeptide (Lys-Gly) (interchain with G-Cter in SUMO). The PDZ-binding signature appears at 596-598 (TDL).

Belongs to the potassium channel family. A (Shaker) (TC 1.A.1.2) subfamily. Kv1.5/KCNA5 sub-subfamily. Homotetramer and heterotetramer of potassium channel proteins. Interacts with DLG1, which enhances channel currents. Forms a ternary complex with DLG1 and CAV3. Interacts with KCNAB1. Interacts with UBE2I. Interacts with XIRP2; the interaction is required for normal action potential configuration in the heart. In terms of processing, glycosylated. Post-translationally, sumoylated on Lys-205, and Lys-521, preferentially with SUMO3. Sumoylation regulates the voltage sensitivity of the channel.

It localises to the cell membrane. It catalyses the reaction K(+)(in) = K(+)(out). In terms of biological role, voltage-gated potassium channel that mediates transmembrane potassium transport in excitable membranes. Forms tetrameric potassium-selective channels through which potassium ions pass in accordance with their electrochemical gradient. The channel alternates between opened and closed conformations in response to the voltage difference across the membrane. Can form functional homotetrameric channels and heterotetrameric channels that contain variable proportions of KCNA1, KCNA2, KCNA4, KCNA5, and possibly other family members as well; channel properties depend on the type of alpha subunits that are part of the channel. Channel properties are modulated by cytoplasmic beta subunits that regulate the subcellular location of the alpha subunits and promote rapid inactivation. Homotetrameric channels display rapid activation and slow inactivation. Required for normal electrical conduction including formation of the infranodal ventricular conduction system and normal action potential configuration, as a result of its interaction with XIRP2. May play a role in regulating the secretion of insulin in normal pancreatic islets. This Oryctolagus cuniculus (Rabbit) protein is Potassium voltage-gated channel subfamily A member 5 (KCNA5).